We begin with the raw amino-acid sequence, 144 residues long: Cytochrome c oxidase subunit 4 isoform 1, mitochondrial (144 aa).

Residues 1–73 (SVVKSEDYAL…SFAEMNRGSN (73 aa)) lie on the Mitochondrial matrix side of the membrane. Position 4 is an N6-acetyllysine; alternate (K4). Residue K4 is modified to N6-succinyllysine; alternate. Phosphoserine occurs at positions 31 and 33. K35 carries the N6-acetyllysine; alternate modification. N6-succinyllysine; alternate is present on K35. Residue K42 is modified to N6-acetyllysine. The helical transmembrane segment at 74-99 (EWKTVVGAAMFFIGFTAILIILEKRY) threads the bilayer. Topologically, residues 100–144 (VYGPLPHTFDKEWVAMQTKRMLDLKVNPVDGLASKWDYDKKEWKK) are mitochondrial intermembrane.

Belongs to the cytochrome c oxidase IV family. As to quaternary structure, component of the cytochrome c oxidase (complex IV, CIV), a multisubunit enzyme composed of 14 subunits. The complex is composed of a catalytic core of 3 subunits MT-CO1, MT-CO2 and MT-CO3, encoded in the mitochondrial DNA, and 11 supernumerary subunits COX4I, COX5A, COX5B, COX6A, COX6B, COX6C, COX7A, COX7B, COX7C, COX8 and NDUFA4, which are encoded in the nuclear genome. The complex exists as a monomer or a dimer and forms supercomplexes (SCs) in the inner mitochondrial membrane with NADH-ubiquinone oxidoreductase (complex I, CI) and ubiquinol-cytochrome c oxidoreductase (cytochrome b-c1 complex, complex III, CIII), resulting in different assemblies (supercomplex SCI(1)III(2)IV(1) and megacomplex MCI(2)III(2)IV(2)). Interacts with PHB2; the interaction decreases in absence of SPHK2. Interacts with AFG1L. Interacts with ABCB7; this interaction allows the regulation of cellular iron homeostasis and cellular reactive oxygen species (ROS) levels in cardiomyocytes. Interacts with FLVCR2; this interaction occurs in the absence of heme and is disrupted upon heme binding. Interacts with IRGC.

Its subcellular location is the mitochondrion inner membrane. Its pathway is energy metabolism; oxidative phosphorylation. Component of the cytochrome c oxidase, the last enzyme in the mitochondrial electron transport chain which drives oxidative phosphorylation. The respiratory chain contains 3 multisubunit complexes succinate dehydrogenase (complex II, CII), ubiquinol-cytochrome c oxidoreductase (cytochrome b-c1 complex, complex III, CIII) and cytochrome c oxidase (complex IV, CIV), that cooperate to transfer electrons derived from NADH and succinate to molecular oxygen, creating an electrochemical gradient over the inner membrane that drives transmembrane transport and the ATP synthase. Cytochrome c oxidase is the component of the respiratory chain that catalyzes the reduction of oxygen to water. Electrons originating from reduced cytochrome c in the intermembrane space (IMS) are transferred via the dinuclear copper A center (CU(A)) of subunit 2 and heme A of subunit 1 to the active site in subunit 1, a binuclear center (BNC) formed by heme A3 and copper B (CU(B)). The BNC reduces molecular oxygen to 2 water molecules using 4 electrons from cytochrome c in the IMS and 4 protons from the mitochondrial matrix. This chain is Cytochrome c oxidase subunit 4 isoform 1, mitochondrial (COX4I1), found in Aotus azarae (Azara's night monkey).